A 262-amino-acid polypeptide reads, in one-letter code: tRNA U34 carboxymethyltransferase (262 aa).

Carboxy-S-adenosyl-L-methionine-binding positions include Lys-25, Trp-39, Lys-44, Gly-63, 114–115, Tyr-135, and Arg-250; that span reads VE.

Belongs to the class I-like SAM-binding methyltransferase superfamily. CmoB family. As to quaternary structure, homotetramer.

The catalysed reaction is carboxy-S-adenosyl-L-methionine + 5-hydroxyuridine(34) in tRNA = 5-carboxymethoxyuridine(34) in tRNA + S-adenosyl-L-homocysteine + H(+). In terms of biological role, catalyzes carboxymethyl transfer from carboxy-S-adenosyl-L-methionine (Cx-SAM) to 5-hydroxyuridine (ho5U) to form 5-carboxymethoxyuridine (cmo5U) at position 34 in tRNAs. In Helicobacter acinonychis (strain Sheeba), this protein is tRNA U34 carboxymethyltransferase.